A 320-amino-acid polypeptide reads, in one-letter code: Ribose-phosphate pyrophosphokinase (320 aa).

Residues 43 to 45 (DGE) and 102 to 103 (RQ) contribute to the ATP site. Mg(2+) is bound by residues histidine 136 and aspartate 178. Lysine 201 is an active-site residue. D-ribose 5-phosphate contacts are provided by residues arginine 203, aspartate 227, and 231-235 (DTAGT).

This sequence belongs to the ribose-phosphate pyrophosphokinase family. Class I subfamily. As to quaternary structure, homohexamer. Requires Mg(2+) as cofactor.

The protein resides in the cytoplasm. It catalyses the reaction D-ribose 5-phosphate + ATP = 5-phospho-alpha-D-ribose 1-diphosphate + AMP + H(+). The protein operates within metabolic intermediate biosynthesis; 5-phospho-alpha-D-ribose 1-diphosphate biosynthesis; 5-phospho-alpha-D-ribose 1-diphosphate from D-ribose 5-phosphate (route I): step 1/1. In terms of biological role, involved in the biosynthesis of the central metabolite phospho-alpha-D-ribosyl-1-pyrophosphate (PRPP) via the transfer of pyrophosphoryl group from ATP to 1-hydroxyl of ribose-5-phosphate (Rib-5-P). The sequence is that of Ribose-phosphate pyrophosphokinase from Clostridium tetani (strain Massachusetts / E88).